Here is a 120-residue protein sequence, read N- to C-terminus: Large ribosomal subunit protein uL18 (120 aa).

The disordered stretch occupies residues 1 to 24 (MITKAAKNATRKKRHARVRAKLTG). The span at 9–20 (ATRKKRHARVRA) shows a compositional bias: basic residues.

It belongs to the universal ribosomal protein uL18 family. As to quaternary structure, part of the 50S ribosomal subunit; part of the 5S rRNA/L5/L18/L25 subcomplex. Contacts the 5S and 23S rRNAs.

Functionally, this is one of the proteins that bind and probably mediate the attachment of the 5S RNA into the large ribosomal subunit, where it forms part of the central protuberance. This chain is Large ribosomal subunit protein uL18, found in Bacillus mycoides (strain KBAB4) (Bacillus weihenstephanensis).